A 621-amino-acid polypeptide reads, in one-letter code: TOX high mobility group box family member 4 (621 aa).

2 disordered regions span residues 153–227 (LGLS…QKPV) and 305–333 (LDPA…ASIE). Phosphothreonine is present on Thr176. Phosphoserine is present on residues Ser178, Ser181, and Ser182. Over residues 183 to 193 (LHEDGVEDFRR) the composition is skewed to basic and acidic residues. The segment covering 208 to 218 (KQKAPKKRKKK) has biased composition (basic residues). Positions 213–218 (KKRKKK) match the Nuclear localization signal motif. The HMG box DNA-binding region spans 223–291 (PQKPVSAYAL…EYLKALAAYK (69 aa)). The segment covering 307 to 319 (PAPPSQTPSPPPM) has biased composition (pro residues). Residue Thr313 is modified to Phosphothreonine. Ser315 bears the Phosphoserine mark. Positions 320 to 333 (ATVDPASPAPASIE) are enriched in low complexity. Arg481 carries the post-translational modification Asymmetric dimethylarginine. Over residues 510–525 (PTVESSPERPMNNSPE) the composition is skewed to polar residues. Residues 510-529 (PTVESSPERPMNNSPEAHTV) form a disordered region. A phosphoserine mark is found at Ser533, Ser550, Ser552, Ser560, Ser562, and Ser567.

As to quaternary structure, component of the PNUTS-PP1 phosphatase complex, composed of PPP1R10/PNUTS, TOX4, WDR82 and PPP1CA or PPP1CB or PPP1CC. Interacts with PPP1R10/PNUTS. Interacts with FOXO1 and CREB1 (increased by cAMP); FOXO1 and CREB1 are required for full induction of TOX4-dependent activity and the interactions are inhibited by insulin. As to expression, expressed in liver (at protein level).

The protein resides in the nucleus. Its subcellular location is the chromosome. Its activity is regulated as follows. In liver, recruited to target gene promoters following treatment with dexamethasone and cAMP. Binding is decreased in presence of insulin. Transcription factor that modulates cell fate reprogramming from the somatic state to the pluripotent and neuronal fate. In liver, controls the expression of hormone-regulated gluconeogenic genes such as G6PC1 and PCK1. This regulation is independent of the insulin receptor activation. Also acts as a regulatory component of protein phosphatase 1 (PP1) complexes. Component of the PNUTS-PP1 protein phosphatase complex, a PP1 complex that regulates RNA polymerase II transcription pause-release. PNUTS-PP1 also plays a role in the control of chromatin structure and cell cycle progression during the transition from mitosis into interphase. In Homo sapiens (Human), this protein is TOX high mobility group box family member 4.